Here is a 1727-residue protein sequence, read N- to C-terminus: Nucleoporin alm1 (1727 aa).

7 coiled-coil regions span residues 57–361 (QEVN…KNTS), 443–463 (NFLS…QAEL), 542–740 (IKEA…AEEL), 804–1106 (AARK…INES), 1223–1427 (GERS…QLNK), 1497–1555 (NEEE…AESA), and 1601–1664 (QKEW…KKDS). Residues 1423–1448 (EQLNKPSATPTATTQSEPSTVSLEEF) are compositionally biased toward polar residues. Disordered stretches follow at residues 1423-1459 (EQLN…SSTQ), 1477-1500 (EKVR…NEEE), and 1656-1727 (LEQS…KKAK). 2 stretches are compositionally biased toward polar residues: residues 1672–1684 (ASKN…SNSE) and 1702–1714 (VDTN…SSSD). Phosphoserine is present on Ser1706.

Its subcellular location is the nucleus. It is found in the nuclear pore complex. The protein resides in the nucleus envelope. Its function is as follows. Maintains the proteasome and its anchor cut8 at the nucleus envelope and is required for kinetochore component proteostasis. Proper kinetochore stoichiometry ensures the correct attachment of kinetochores to spindle microtubules during cytokinesis. Required for the localization of spindle assembly checkpoint (SAC) protein mad2 and bub1 to the nucleus envelope during interphase, but not their localization during mitosis. This Schizosaccharomyces pombe (strain 972 / ATCC 24843) (Fission yeast) protein is Nucleoporin alm1.